The primary structure comprises 493 residues: Protein nucleotidyltransferase YdiU (493 aa).

ATP-binding residues include glycine 81, glycine 83, arginine 84, lysine 103, aspartate 115, glycine 116, arginine 166, and arginine 173. The active-site Proton acceptor is aspartate 244. Residues asparagine 245 and aspartate 254 each contribute to the Mg(2+) site. Residue aspartate 254 coordinates ATP.

Belongs to the SELO family. Requires Mg(2+) as cofactor. Mn(2+) is required as a cofactor.

It catalyses the reaction L-seryl-[protein] + ATP = 3-O-(5'-adenylyl)-L-seryl-[protein] + diphosphate. It carries out the reaction L-threonyl-[protein] + ATP = 3-O-(5'-adenylyl)-L-threonyl-[protein] + diphosphate. The catalysed reaction is L-tyrosyl-[protein] + ATP = O-(5'-adenylyl)-L-tyrosyl-[protein] + diphosphate. The enzyme catalyses L-histidyl-[protein] + UTP = N(tele)-(5'-uridylyl)-L-histidyl-[protein] + diphosphate. It catalyses the reaction L-seryl-[protein] + UTP = O-(5'-uridylyl)-L-seryl-[protein] + diphosphate. It carries out the reaction L-tyrosyl-[protein] + UTP = O-(5'-uridylyl)-L-tyrosyl-[protein] + diphosphate. Nucleotidyltransferase involved in the post-translational modification of proteins. It can catalyze the addition of adenosine monophosphate (AMP) or uridine monophosphate (UMP) to a protein, resulting in modifications known as AMPylation and UMPylation. The protein is Protein nucleotidyltransferase YdiU of Shewanella frigidimarina (strain NCIMB 400).